A 510-amino-acid chain; its full sequence is D-alanine--D-alanyl carrier protein ligase (510 aa).

Residue 157-158 (TS) participates in ATP binding. Asp-202 provides a ligand contact to D-alanine. 297-302 (NTYGPT) serves as a coordination point for ATP. Residue Val-306 participates in D-alanine binding. Residues Asp-389 and Lys-498 each coordinate ATP. Lys-498 contacts D-alanine.

This sequence belongs to the ATP-dependent AMP-binding enzyme family. DltA subfamily.

Its subcellular location is the cytoplasm. It carries out the reaction holo-[D-alanyl-carrier protein] + D-alanine + ATP = D-alanyl-[D-alanyl-carrier protein] + AMP + diphosphate. It participates in cell wall biogenesis; lipoteichoic acid biosynthesis. In terms of biological role, catalyzes the first step in the D-alanylation of lipoteichoic acid (LTA), the activation of D-alanine and its transfer onto the D-alanyl carrier protein (Dcp) DltC. In an ATP-dependent two-step reaction, forms a high energy D-alanyl-AMP intermediate, followed by transfer of the D-alanyl residue as a thiol ester to the phosphopantheinyl prosthetic group of the Dcp. D-alanylation of LTA plays an important role in modulating the properties of the cell wall in Gram-positive bacteria, influencing the net charge of the cell wall. In Listeria monocytogenes serotype 4b (strain CLIP80459), this protein is D-alanine--D-alanyl carrier protein ligase.